We begin with the raw amino-acid sequence, 1418 residues long: JmjC domain-containing histone demethylation protein 1 (1418 aa).

Disordered stretches follow at residues 1–86 (MIGA…SSST), 102–162 (APLS…STFD), and 308–329 (GADR…SDEN). Over residues 44 to 60 (WIDRGDSQAASYDRDRV) the composition is skewed to basic and acidic residues. The span at 61–71 (TSNNDVYSSTN) shows a compositional bias: polar residues. Over residues 127–139 (STERPAKRPRSEK) the composition is skewed to basic and acidic residues. Positions 143–162 (PLHQPQTTVAPDANPSSTFD) are enriched in polar residues. Residues 308 to 321 (GADRASLDVPPRGD) show a composition bias toward basic and acidic residues. The PHD-type zinc finger occupies 331-391 (QANCAACNLV…KFICRRCRPI (61 aa)). Positions 588-746 (VSQSKLGKLI…MQIKVAKIEK (159 aa)) constitute a JmjC domain. Threonine 639 provides a ligand contact to substrate. Histidine 642 and aspartate 644 together coordinate Fe cation. Lysine 659 contacts substrate. Histidine 714 contacts Fe cation. 4 disordered regions span residues 891 to 964 (PQWT…TVEI), 1090 to 1118 (NAAT…CDDC), 1130 to 1195 (YGRI…HTQR), and 1250 to 1394 (KPTA…DEPD). Residues 907–925 (LTEKKPAGRPSRRSERNAE) show a composition bias toward basic and acidic residues. 2 stretches are compositionally biased toward basic and acidic residues: residues 1130–1143 (YGRI…ERSK) and 1186–1195 (AEGDMSHTQR). A compositionally biased stretch (polar residues) spans 1250–1263 (KPTASLVSPPTSQA). Low complexity predominate over residues 1341–1352 (SSKKPASRPSSS).

Belongs to the JHDM1 histone demethylase family. Fe(2+) serves as cofactor.

It localises to the nucleus. The catalysed reaction is N(6),N(6)-dimethyl-L-lysyl(36)-[histone H3] + 2 2-oxoglutarate + 2 O2 = L-lysyl(36)-[histone H3] + 2 formaldehyde + 2 succinate + 2 CO2. Functionally, histone demethylase that specifically demethylates 'Lys-36' of histone H3, thereby playing a central role in histone code. In Aspergillus fumigatus (strain ATCC MYA-4609 / CBS 101355 / FGSC A1100 / Af293) (Neosartorya fumigata), this protein is JmjC domain-containing histone demethylation protein 1 (jhd1).